A 629-amino-acid chain; its full sequence is G1-specific transcription factors activator MSA1 (629 aa).

Basic residues predominate over residues 1–11 (MDKSMIKKRGR). Disordered regions lie at residues 1–60 (MDKS…KRRL), 83–106 (STPT…NDSY), 217–286 (YCDT…SSLQ), 455–485 (VQVQ…NMNS), and 586–629 (PNLH…IDDQ). Residues 21–37 (PLQSPMAHSSMQVQKQG) show a composition bias toward polar residues. The span at 245-260 (IETSASPIGSARNNNI) shows a compositional bias: polar residues. Composition is skewed to low complexity over residues 261–277 (LLSQ…QLKP) and 455–475 (VQVQ…RQFQ). Ser268 is subject to Phosphoserine. The segment covering 614-629 (KQDDARTALKRLIDDQ) has biased composition (basic and acidic residues).

As to quaternary structure, interacts with transcription complexes SCB-binding factor (SBF) and MCB-binding factor (MBF) at their target promoters. Interacts with MBP1 and SWI6. Phosphorylated by CDC28.

Its function is as follows. Activator of G1-specific transcription factors, MBF and SBF. Promotes both the timing of G1-specific gene transcription and cell cycle initiation. Associates with SBF- and MBF-regulated target promoters and this binding is maximal during the G1 phase, prior to maximum budding. Affects cell cycle initiation by advancing the timing of transcription of G1-specific genes. Overexpression advances the timing of SBF-dependent transcription and budding. Depletion delays both indicators of cell cycle initiation. This Saccharomyces cerevisiae (strain ATCC 204508 / S288c) (Baker's yeast) protein is G1-specific transcription factors activator MSA1 (MSA1).